Reading from the N-terminus, the 273-residue chain is Large ribosomal subunit protein uL2c (273 aa).

2 disordered regions span residues 30–55 and 222–243; these read EKKL…RHRG and GSAM…PIGR. The segment covering 45–55 has biased composition (basic residues); it reads NKGRITTRHRG.

It belongs to the universal ribosomal protein uL2 family. As to quaternary structure, part of the 50S ribosomal subunit.

The protein resides in the plastid. The protein is Large ribosomal subunit protein uL2c (rpl2) of Prototheca wickerhamii.